Here is a 1368-residue protein sequence, read N- to C-terminus: Mediator of RNA polymerase II transcription subunit 23 (1368 aa).

The disordered stretch occupies residues 1343–1368; that stretch reads VPPQAMNSGSPAPQSNQVPVSLPVTQ. Polar residues predominate over residues 1347-1368; it reads AMNSGSPAPQSNQVPVSLPVTQ.

The protein belongs to the Mediator complex subunit 23 family. In terms of assembly, interacts with ELK1. Component of the Mediator complex, which is composed of MED1, MED4, MED6, MED7, MED8, MED9, MED10, MED11, MED12, MED13, MED13L, MED14, MED15, MED16, MED17, MED18, MED19, MED20, MED21, MED22, MED23, MED24, MED25, MED26, MED27, MED29, MED30, MED31, CCNC, CDK8 and CDC2L6/CDK11. The MED12, MED13, CCNC and CDK8 subunits form a distinct module termed the CDK8 module. Mediator containing the CDK8 module is less active than Mediator lacking this module in supporting transcriptional activation. Individual preparations of the Mediator complex lacking one or more distinct subunits have been variously termed ARC, CRSP, DRIP, PC2, SMCC and TRAP. Interacts with CEBPB (when not methylated), CTNNB1, and GLI3. Interacts with the adenovirus E1A protein.

The protein resides in the nucleus. In terms of biological role, required for transcriptional activation subsequent to the assembly of the pre-initiation complex. Component of the Mediator complex, a coactivator involved in the regulated transcription of nearly all RNA polymerase II-dependent genes. Mediator functions as a bridge to convey information from gene-specific regulatory proteins to the basal RNA polymerase II transcription machinery. Mediator is recruited to promoters by direct interactions with regulatory proteins and serves as a scaffold for the assembly of a functional pre-initiation complex with RNA polymerase II and the general transcription factors. Required for transcriptional activation by adenovirus E1A protein. Required for ELK1-dependent transcriptional activation in response to activated Ras signaling. This Homo sapiens (Human) protein is Mediator of RNA polymerase II transcription subunit 23 (MED23).